Consider the following 383-residue polypeptide: 2-methylcitrate synthase 2 (383 aa).

Residues Arg73 and His195 each contribute to the substrate site. Residue His230 is part of the active site. 263 to 267 (VVMGF) contributes to the CoA binding site. The active site involves His269. Substrate is bound at residue Arg278. The active site involves Asp320. Substrate is bound by residues Arg345 and Arg364.

The protein belongs to the citrate synthase family. In terms of assembly, homodimer.

It catalyses the reaction propanoyl-CoA + oxaloacetate + H2O = (2S,3S)-2-methylcitrate + CoA + H(+). The enzyme catalyses oxaloacetate + acetyl-CoA + H2O = citrate + CoA + H(+). The protein operates within organic acid metabolism; propanoate degradation. It functions in the pathway carbohydrate metabolism; tricarboxylic acid cycle; isocitrate from oxaloacetate: step 1/2. In terms of biological role, involved in the catabolism of short chain fatty acids (SCFA) via the tricarboxylic acid (TCA)(acetyl degradation route) and via the 2-methylcitrate cycle I (propionate degradation route). Catalyzes the Claisen condensation of propionyl-CoA and oxaloacetate (OAA) to yield 2-methylcitrate (2-MC) and CoA. Also catalyzes the condensation of oxaloacetate with acetyl-CoA but with a lower specificity. The protein is 2-methylcitrate synthase 2 (prpC2) of Corynebacterium glutamicum (strain ATCC 13032 / DSM 20300 / JCM 1318 / BCRC 11384 / CCUG 27702 / LMG 3730 / NBRC 12168 / NCIMB 10025 / NRRL B-2784 / 534).